A 535-amino-acid polypeptide reads, in one-letter code: Alkaline phosphatase, placental type (535 aa).

The signal sequence occupies residues 1-22; the sequence is MLGPCMLLLLLLLGLRLQLSLG. Aspartate 64 provides a ligand contact to Mg(2+). Zn(2+) contacts are provided by aspartate 64 and serine 114. Serine 114 acts as the Phosphoserine intermediate in catalysis. A disulfide bridge links cysteine 143 with cysteine 205. Asparagine 144 carries an N-linked (GlcNAc...) asparagine glycan. Residue serine 177 participates in Mg(2+) binding. Glutamate 238 is a Ca(2+) binding site. Asparagine 271 carries an N-linked (GlcNAc...) asparagine glycan. Ca(2+) is bound by residues phenylalanine 291, glutamate 292, and aspartate 307. Mg(2+) is bound at residue glutamate 333. The Zn(2+) site is built by aspartate 338, histidine 342, aspartate 379, and histidine 380. Positions 425-449 are disordered; it reads DGARPDVTESESGSPEYRQQSAVPL. Positions 434–446 are enriched in polar residues; the sequence is SESGSPEYRQQSA. Histidine 454 serves as a coordination point for Zn(2+). A disulfide bond links cysteine 489 and cysteine 496. Aspartate 506 is lipidated: GPI-anchor amidated aspartate. Positions 507–535 are cleaved as a propeptide — removed in mature form; the sequence is AAHPGRSVVPALLPLLAGTLLLLETATAP. Residues 513 to 529 traverse the membrane as a helical segment; sequence SVVPALLPLLAGTLLLL.

This sequence belongs to the alkaline phosphatase family. Homodimer. It depends on Mg(2+) as a cofactor. Zn(2+) is required as a cofactor. Ca(2+) serves as cofactor. In terms of tissue distribution, detected in placenta (at protein level).

The protein resides in the cell membrane. The catalysed reaction is a phosphate monoester + H2O = an alcohol + phosphate. Functionally, alkaline phosphatase that can hydrolyze various phosphate compounds. The polypeptide is Alkaline phosphatase, placental type (Homo sapiens (Human)).